The sequence spans 1883 residues: Lysophospholipase NTE1 (1883 aa).

Over 1–75 the chain is Cytoplasmic; the sequence is MSQVPVASPA…LLRVVLASLN (75 aa). The chain crosses the membrane as a helical span at residues 76–96; the sequence is LIRILATFSTITVPSLVYAIL. At 97–103 the chain is on the lumenal side; it reads HYSLTLQ. The chain crosses the membrane as a helical span at residues 104–124; that stretch reads LNFPSLALLFLTSLISAFIWL. The Cytoplasmic portion of the chain corresponds to 125-1883; that stretch reads RYRHLNKYER…AGISARRNSI (1759 aa). 6 disordered regions span residues 284–327, 355–410, 618–693, 716–764, 921–1069, and 1084–1108; these read HLAP…FNPP, ERLG…LYHA, SQRS…MVGP, SAQP…RKGS, EEDR…ATNS, and LHQQ…GKRS. A compositionally biased stretch (polar residues) spans 311–327; that stretch reads NNATAPTSPYSSAFNPP. Low complexity predominate over residues 372-383; that stretch reads ARTASSGTASAT. A compositionally biased stretch (polar residues) spans 650-668; it reads PSLTTSSKQSNQKPTSSRI. A nucleoside 3',5'-cyclic phosphate is bound by residues 863–1158 and 1166–1285; these read AGHG…RRPI and RLLS…IARR. Residues 936-948 show a composition bias toward polar residues; the sequence is TDASSGSSRQNRP. Basic and acidic residues predominate over residues 964–974; sequence LLDERNLREAD. Polar residues-rich tracts occupy residues 988 to 998 and 1084 to 1100; these read ISSNGDGNSGS and LHQQ…QSSQ. Residues 1544–1708 enclose the PNPLA domain; that stretch reads LVLGGGGARG…VDNLPVTVML (165 aa). Positions 1548–1553 match the GXGXXG motif; the sequence is GGGARG. The GXSXG motif lies at 1575–1579; it reads GTSIG. The Nucleophile role is filled by serine 1577. The active-site Proton acceptor is aspartate 1695. A DGA/G motif is present at residues 1695 to 1697; the sequence is DGG. A disordered region spans residues 1852–1883; sequence DESGVGGGVRKIRKKRRRTRRKAGISARRNSI. Positions 1861-1874 are enriched in basic residues; it reads RKIRKKRRRTRRKA.

It belongs to the NTE family.

The protein resides in the endoplasmic reticulum membrane. It carries out the reaction a 1-acyl-sn-glycero-3-phosphocholine + H2O = sn-glycerol 3-phosphocholine + a fatty acid + H(+). With respect to regulation, inhibited by organophosphorus esters. In terms of biological role, intracellular phospholipase B that catalyzes the double deacylation of phosphatidylcholine (PC) to glycerophosphocholine (GroPCho). Plays an important role in membrane lipid homeostasis. Responsible for the rapid PC turnover in response to inositol, elevated temperatures, or when choline is present in the growth medium. The sequence is that of Lysophospholipase NTE1 (NTE1) from Mycosarcoma maydis (Corn smut fungus).